The chain runs to 807 residues: G-type lectin S-receptor-like serine/threonine-protein kinase At1g61420 (807 aa).

A signal peptide spans 1-24 (MGKKWIVFFAYLLLSSFFISSSSA). Positions 25 to 144 (GITKESPLPI…FSGRTLWQSF (120 aa)) constitute a Bulb-type lectin domain. The Extracellular portion of the chain corresponds to 25–426 (GITKESPLPI…ELGGNKRKKA (402 aa)). Asparagine 53, asparagine 94, asparagine 117, asparagine 134, asparagine 236, and asparagine 267 each carry an N-linked (GlcNAc...) asparagine glycan. The EGF-like; atypical domain maps to 278–314 (PEHSCDYYGVCGPFGLCVKSVPPKCTCFKGFVPKLIE). Cystine bridges form between cysteine 282–cysteine 294 and cysteine 288–cysteine 302. N-linked (GlcNAc...) asparagine glycans are attached at residues asparagine 320, asparagine 336, and asparagine 375. One can recognise a PAN domain in the interval 333–413 (CQGNSTGKYA…EGGELLSIRL (81 aa)). 2 disulfides stabilise this stretch: cysteine 368/cysteine 389 and cysteine 372/cysteine 378. The helical transmembrane segment at 427–447 (ITASIVSLSLVVIIAFVAFCF) threads the bilayer. Residues 448–807 (WRYRVKHNAD…EMTKSVILGR (360 aa)) are Cytoplasmic-facing. A Protein kinase domain is found at 494–779 (FSISNKLGQG…DLPPPEQPTF (286 aa)). Residues 500–508 (LGQGGFGPV) and lysine 522 contribute to the ATP site. Phosphoserine occurs at positions 528 and 543. Residues 583 to 600 (RKRLEIDWPKRLDIIQGI) are caM-binding. The active-site Proton acceptor is the aspartate 619. Phosphoserine is present on residues serine 623 and serine 636. The residue at position 653 (threonine 653) is a Phosphothreonine. Phosphoserine is present on residues serine 696 and serine 790.

This sequence belongs to the protein kinase superfamily. Ser/Thr protein kinase family.

The protein resides in the cell membrane. The enzyme catalyses L-seryl-[protein] + ATP = O-phospho-L-seryl-[protein] + ADP + H(+). The catalysed reaction is L-threonyl-[protein] + ATP = O-phospho-L-threonyl-[protein] + ADP + H(+). In Arabidopsis thaliana (Mouse-ear cress), this protein is G-type lectin S-receptor-like serine/threonine-protein kinase At1g61420.